We begin with the raw amino-acid sequence, 647 residues long: UvrABC system protein C (647 aa).

One can recognise a GIY-YIG domain in the interval 16–95 (VEPGVYRFRD…IKEFDPRFNI (80 aa)). The 36-residue stretch at 208 to 243 (DRYARDLERKMSAAAEQLDFERAARLRDDLFALKRA) folds into the UVR domain.

It belongs to the UvrC family. Interacts with UvrB in an incision complex.

It localises to the cytoplasm. The UvrABC repair system catalyzes the recognition and processing of DNA lesions. UvrC both incises the 5' and 3' sides of the lesion. The N-terminal half is responsible for the 3' incision and the C-terminal half is responsible for the 5' incision. The polypeptide is UvrABC system protein C (Mycobacterium leprae (strain Br4923)).